A 430-amino-acid polypeptide reads, in one-letter code: Putative aspergillopepsin A-like aspartic endopeptidase MCYG_07979 (430 aa).

A signal peptide spans 1 to 17 (MHLSSLLVAVLLPLALS). Positions 18–87 (KPTPRKKPGS…SKIAGGAPGA (70 aa)) are cleaved as a propeptide — activation peptide. The disordered stretch occupies residues 59 to 105 (STQGMDGYRPEPISRFQGNSKIAGGAPGAKDDGKDEKGEVENNPTSH). The span at 87 to 98 (AKDDGKDEKGEV) shows a compositional bias: basic and acidic residues. The region spanning 109-427 (FLSPVTIGGQ…DYRGPSVSLA (319 aa)) is the Peptidase A1 domain. Residue D125 is part of the active site. An N-linked (GlcNAc...) asparagine glycan is attached at N306. D314 is a catalytic residue. N352 carries N-linked (GlcNAc...) asparagine glycosylation.

It belongs to the peptidase A1 family.

It is found in the secreted. The protein is Putative aspergillopepsin A-like aspartic endopeptidase MCYG_07979 of Arthroderma otae (strain ATCC MYA-4605 / CBS 113480) (Microsporum canis).